The primary structure comprises 45 residues: Photosystem II reaction center protein K (45 aa).

A propeptide spanning residues 1–8 (METIYLLA) is cleaved from the precursor. The helical transmembrane segment at 16-40 (IFDPLVDVLPVIPLFFLALAFVWQA) threads the bilayer.

It belongs to the PsbK family. PSII is composed of 1 copy each of membrane proteins PsbA, PsbB, PsbC, PsbD, PsbE, PsbF, PsbH, PsbI, PsbJ, PsbK, PsbL, PsbM, PsbT, PsbX, PsbY, PsbZ, Psb30/Ycf12, peripheral proteins PsbO, CyanoQ (PsbQ), PsbU, PsbV and a large number of cofactors. It forms dimeric complexes.

It is found in the cellular thylakoid membrane. One of the components of the core complex of photosystem II (PSII). PSII is a light-driven water:plastoquinone oxidoreductase that uses light energy to abstract electrons from H(2)O, generating O(2) and a proton gradient subsequently used for ATP formation. It consists of a core antenna complex that captures photons, and an electron transfer chain that converts photonic excitation into a charge separation. The polypeptide is Photosystem II reaction center protein K (Synechocystis sp. (strain ATCC 27184 / PCC 6803 / Kazusa)).